A 361-amino-acid polypeptide reads, in one-letter code: Nicotinate-nucleotide--dimethylbenzimidazole phosphoribosyltransferase (361 aa).

E315 functions as the Proton acceptor in the catalytic mechanism.

This sequence belongs to the CobT family.

It catalyses the reaction 5,6-dimethylbenzimidazole + nicotinate beta-D-ribonucleotide = alpha-ribazole 5'-phosphate + nicotinate + H(+). Its pathway is nucleoside biosynthesis; alpha-ribazole biosynthesis; alpha-ribazole from 5,6-dimethylbenzimidazole: step 1/2. Functionally, catalyzes the synthesis of alpha-ribazole-5'-phosphate from nicotinate mononucleotide (NAMN) and 5,6-dimethylbenzimidazole (DMB). This chain is Nicotinate-nucleotide--dimethylbenzimidazole phosphoribosyltransferase, found in Clostridium perfringens (strain 13 / Type A).